The following is a 393-amino-acid chain: Riboflavin biosynthesis protein RibBA (393 aa).

The tract at residues 1–200 (MQFDNIDSAL…IDDLIEYRKK (200 aa)) is DHBP synthase. Residues 27–28 (RE), Asp32, 139–143 (RNGHT), and Glu163 contribute to the D-ribulose 5-phosphate site. A Mg(2+)-binding site is contributed by Glu28. His142 lines the Mg(2+) pocket. The interval 201-393 (LEPEIEFKAK…TKKIKMGHLI (193 aa)) is GTP cyclohydrolase II. 249-253 (RLHSA) is a binding site for GTP. Positions 254, 265, and 267 each coordinate Zn(2+). GTP contacts are provided by residues Gln270, 291-293 (EGR), and Thr313. Asp325 serves as the catalytic Proton acceptor; for GTP cyclohydrolase activity. Catalysis depends on Arg327, which acts as the Nucleophile; for GTP cyclohydrolase activity. GTP contacts are provided by Ser348 and Lys353.

This sequence in the N-terminal section; belongs to the DHBP synthase family. The protein in the C-terminal section; belongs to the GTP cyclohydrolase II family. Mg(2+) serves as cofactor. Mn(2+) is required as a cofactor. It depends on Zn(2+) as a cofactor.

It carries out the reaction D-ribulose 5-phosphate = (2S)-2-hydroxy-3-oxobutyl phosphate + formate + H(+). The enzyme catalyses GTP + 4 H2O = 2,5-diamino-6-hydroxy-4-(5-phosphoribosylamino)-pyrimidine + formate + 2 phosphate + 3 H(+). It functions in the pathway cofactor biosynthesis; riboflavin biosynthesis; 2-hydroxy-3-oxobutyl phosphate from D-ribulose 5-phosphate: step 1/1. Its pathway is cofactor biosynthesis; riboflavin biosynthesis; 5-amino-6-(D-ribitylamino)uracil from GTP: step 1/4. Functionally, catalyzes the conversion of D-ribulose 5-phosphate to formate and 3,4-dihydroxy-2-butanone 4-phosphate. Catalyzes the conversion of GTP to 2,5-diamino-6-ribosylamino-4(3H)-pyrimidinone 5'-phosphate (DARP), formate and pyrophosphate. This is Riboflavin biosynthesis protein RibBA from Staphylococcus aureus (strain COL).